The chain runs to 272 residues: Dermonecrotic toxin LspaSicTox-alphaII1 (272 aa).

Residue His5 is part of the active site. Residues Glu25 and Asp27 each contribute to the Mg(2+) site. The Nucleophile role is filled by His41. 2 disulfide bridges follow: Cys45-Cys51 and Cys47-Cys190. Asp85 contacts Mg(2+).

This sequence belongs to the arthropod phospholipase D family. Class II subfamily. The cofactor is Mg(2+). In terms of tissue distribution, expressed by the venom gland.

Its subcellular location is the secreted. The enzyme catalyses an N-(acyl)-sphingosylphosphocholine = an N-(acyl)-sphingosyl-1,3-cyclic phosphate + choline. The catalysed reaction is an N-(acyl)-sphingosylphosphoethanolamine = an N-(acyl)-sphingosyl-1,3-cyclic phosphate + ethanolamine. It carries out the reaction a 1-acyl-sn-glycero-3-phosphocholine = a 1-acyl-sn-glycero-2,3-cyclic phosphate + choline. It catalyses the reaction a 1-acyl-sn-glycero-3-phosphoethanolamine = a 1-acyl-sn-glycero-2,3-cyclic phosphate + ethanolamine. Its function is as follows. Dermonecrotic toxins cleave the phosphodiester linkage between the phosphate and headgroup of certain phospholipids (sphingolipid and lysolipid substrates), forming an alcohol (often choline) and a cyclic phosphate. This toxin acts on sphingomyelin (SM). It may also act on ceramide phosphoethanolamine (CPE), lysophosphatidylcholine (LPC) and lysophosphatidylethanolamine (LPE), but not on lysophosphatidylserine (LPS), and lysophosphatidylglycerol (LPG). It acts by transphosphatidylation, releasing exclusively cyclic phosphate products as second products. Induces dermonecrosis, hemolysis, increased vascular permeability, edema, inflammatory response, and platelet aggregation. This is Dermonecrotic toxin LspaSicTox-alphaII1 from Loxosceles spadicea (Recluse spider).